A 150-amino-acid chain; its full sequence is Deoxyuridine 5'-triphosphate nucleotidohydrolase (150 aa).

Substrate contacts are provided by residues 69–71, asparagine 82, and 86–88; these read RSG and TID.

This sequence belongs to the dUTPase family. The cofactor is Mg(2+).

The catalysed reaction is dUTP + H2O = dUMP + diphosphate + H(+). Its pathway is pyrimidine metabolism; dUMP biosynthesis; dUMP from dCTP (dUTP route): step 2/2. In terms of biological role, this enzyme is involved in nucleotide metabolism: it produces dUMP, the immediate precursor of thymidine nucleotides and it decreases the intracellular concentration of dUTP so that uracil cannot be incorporated into DNA. In Syntrophus aciditrophicus (strain SB), this protein is Deoxyuridine 5'-triphosphate nucleotidohydrolase.